The chain runs to 63 residues: Large ribosomal subunit protein bL28 (63 aa).

This sequence belongs to the bacterial ribosomal protein bL28 family.

In Clostridium novyi (strain NT), this protein is Large ribosomal subunit protein bL28.